The following is a 339-amino-acid chain: Tetraacyldisaccharide 4'-kinase (339 aa).

58–65 (TVGGSGKT) is an ATP binding site.

The protein belongs to the LpxK family.

It catalyses the reaction a lipid A disaccharide + ATP = a lipid IVA + ADP + H(+). Its pathway is glycolipid biosynthesis; lipid IV(A) biosynthesis; lipid IV(A) from (3R)-3-hydroxytetradecanoyl-[acyl-carrier-protein] and UDP-N-acetyl-alpha-D-glucosamine: step 6/6. Transfers the gamma-phosphate of ATP to the 4'-position of a tetraacyldisaccharide 1-phosphate intermediate (termed DS-1-P) to form tetraacyldisaccharide 1,4'-bis-phosphate (lipid IVA). The chain is Tetraacyldisaccharide 4'-kinase from Shewanella baltica (strain OS155 / ATCC BAA-1091).